Reading from the N-terminus, the 102-residue chain is Integration host factor subunit alpha (102 aa).

This sequence belongs to the bacterial histone-like protein family. As to quaternary structure, heterodimer of an alpha and a beta chain.

Functionally, this protein is one of the two subunits of integration host factor, a specific DNA-binding protein that functions in genetic recombination as well as in transcriptional and translational control. The sequence is that of Integration host factor subunit alpha from Chromohalobacter salexigens (strain ATCC BAA-138 / DSM 3043 / CIP 106854 / NCIMB 13768 / 1H11).